The sequence spans 392 residues: Heavy metal-associated isoprenylated plant protein 6 (392 aa).

Residues 1 to 19 are compositionally biased toward basic and acidic residues; the sequence is MGEKKEETATKPQGEKKPT. Positions 1–22 are disordered; that stretch reads MGEKKEETATKPQGEKKPTDGG. In terms of domain architecture, HMA 1 spans 23-86; that stretch reads ITTVVMKLDM…KVADKIKRPV (64 aa). Cd(2+) contacts are provided by C34 and C37. The interval 89–157 is disordered; sequence VSTVAPPKKE…PPPPKESTVV (69 aa). Residues 106–145 show a composition bias toward basic and acidic residues; sequence AEKKPSPAAEEKPAEKKPAAVEKPGEKKEEKKKEEGEKKA. Residues 153 to 216 enclose the HMA 2 domain; that stretch reads ESTVVLKTKL…YLNEKLKRTV (64 aa). Residues C164 and C167 each contribute to the Cd(2+) site. Basic and acidic residues predominate over residues 258-270; the sequence is KKVDGGGEKKKEV. Disordered regions lie at residues 258–285 and 350–392; these read KKVD…GGDG and GQGY…CSVM. Residues 272-285 are compositionally biased toward gly residues; the sequence is VGGGGGGGGGGGDG. C389 bears the Cysteine methyl ester mark. A lipid anchor (S-farnesyl cysteine) is attached at C389. A propeptide spans 390 to 392 (removed in mature form); that stretch reads SVM.

Belongs to the HIPP family. As to expression, expressed in petioles, hypocotyls, peduncles, vascular bundles and root meristems.

The protein localises to the cell membrane. Functionally, heavy-metal-binding protein. Involved in the maintenance of heavy metal homeostasis and/or in detoxification. This is Heavy metal-associated isoprenylated plant protein 6 from Arabidopsis thaliana (Mouse-ear cress).